The chain runs to 261 residues: 3-hydroxyacyl-CoA dehydrogenase type-2 (261 aa).

A2 carries the N-acetylalanine modification. S20, L22, and D41 together coordinate NAD(+). Residue K53 is modified to N6-acetyllysine; alternate. K53 carries the post-translational modification N6-succinyllysine; alternate. V65 is a binding site for NAD(+). At K69 the chain carries N6-acetyllysine. NAD(+) is bound at residue C91. Residues K99 and K105 each carry the N6-acetyllysine modification. S155 serves as a coordination point for substrate. NAD(+) contacts are provided by Y168, K172, F201, and T203. Y168 serves as the catalytic Proton acceptor. The residue at position 212 (K212) is an N6-acetyllysine; alternate. An N6-succinyllysine; alternate modification is found at K212.

It belongs to the short-chain dehydrogenases/reductases (SDR) family. In terms of assembly, homotetramer. Component of mitochondrial ribonuclease P, a complex composed of TRMT10C/MRPP1, HSD17B10/MRPP2 and PRORP/MRPP3. Interacts with TRMT10C/MRPP1; forming the MRPP1-MRPP2 subcomplex of the mitochondrial ribonuclease P complex.

It is found in the mitochondrion. The protein resides in the mitochondrion matrix. It localises to the mitochondrion nucleoid. It catalyses the reaction a (3S)-3-hydroxyacyl-CoA + NAD(+) = a 3-oxoacyl-CoA + NADH + H(+). It carries out the reaction (2S,3S)-3-hydroxy-2-methylbutanoyl-CoA + NAD(+) = 2-methyl-3-oxobutanoyl-CoA + NADH + H(+). The enzyme catalyses testosterone + NAD(+) = androst-4-ene-3,17-dione + NADH + H(+). The catalysed reaction is 5alpha-androstane-3alpha,17beta-diol + NAD(+) = 17beta-hydroxy-5alpha-androstan-3-one + NADH + H(+). It catalyses the reaction 17beta-estradiol + NAD(+) = estrone + NADH + H(+). It carries out the reaction cholate + NAD(+) = 3alpha,12alpha-dihydroxy-7-oxo-5beta-cholanate + NADH + H(+). The enzyme catalyses (3S)-3-hydroxybutanoyl-CoA + NAD(+) = acetoacetyl-CoA + NADH + H(+). The catalysed reaction is (3S)-hydroxyoctanoyl-CoA + NAD(+) = 3-oxooctanoyl-CoA + NADH + H(+). It catalyses the reaction (3S)-hydroxyhexadecanoyl-CoA + NAD(+) = 3-oxohexadecanoyl-CoA + NADH + H(+). It carries out the reaction 17beta-hydroxy-5alpha-androstan-3-one + NAD(+) = 5alpha-androstan-3,17-dione + NADH + H(+). The enzyme catalyses 5alpha-pregnan-20beta-ol-3-one + NAD(+) = 5alpha-pregnane-3,20-dione + NADH + H(+). The catalysed reaction is 3alpha-hydroxy-5alpha-pregnan-20-one + NAD(+) = 5alpha-pregnane-3,20-dione + NADH + H(+). It catalyses the reaction cortisone + NAD(+) = 17alpha-hydroxypregn-4-en-3,11,20-trione-21-al + NADH + H(+). It carries out the reaction 11-dehydrocorticosterone + NAD(+) = pregn-4-ene-3,11,20,21-tetraone + NADH + H(+). The enzyme catalyses cortisol + NAD(+) = 11beta,17alpha-dihydroxypregn-4-ene-3,20,21-trione + NADH + H(+). The catalysed reaction is chenodeoxycholate + NAD(+) = 7-oxolithocholate + NADH + H(+). It catalyses the reaction ursodeoxycholate + NAD(+) = 7-oxolithocholate + NADH + H(+). It carries out the reaction 3beta,7beta-dihydroxy-5beta-cholan-24-oate + NAD(+) = 3beta-hydroxy-7-oxo-5beta-cholan-24-oate + NADH + H(+). The protein operates within amino-acid degradation; L-isoleucine degradation. It functions in the pathway lipid metabolism; fatty acid beta-oxidation. It participates in steroid metabolism. Its pathway is lipid metabolism; bile acid biosynthesis. Functionally, mitochondrial dehydrogenase involved in pathways of fatty acid, branched-chain amino acid and steroid metabolism. Acts as (S)-3-hydroxyacyl-CoA dehydrogenase in mitochondrial fatty acid beta-oxidation, a major degradation pathway of fatty acids. Catalyzes the third step in the beta-oxidation cycle, namely the reversible conversion of (S)-3-hydroxyacyl-CoA to 3-ketoacyl-CoA. Preferentially accepts straight medium- and short-chain acyl-CoA substrates with highest efficiency for (3S)-hydroxybutanoyl-CoA. Acts as 3-hydroxy-2-methylbutyryl-CoA dehydrogenase in branched-chain amino acid catabolic pathway. Catalyzes the oxidation of 3-hydroxy-2-methylbutanoyl-CoA into 2-methyl-3-oxobutanoyl-CoA, a step in isoleucine degradation pathway. Has hydroxysteroid dehydrogenase activity toward steroid hormones and bile acids. Catalyzes the oxidation of 3alpha-, 17beta-, 20beta- and 21-hydroxysteroids and 7alpha- and 7beta-hydroxy bile acids. Oxidizes allopregnanolone/brexanolone at the 3alpha-hydroxyl group, which is known to be critical for the activation of gamma-aminobutyric acid receptors (GABAARs) chloride channel. Has phospholipase C-like activity toward cardiolipin and its oxidized species. Likely oxidizes the 2'-hydroxyl in the head group of cardiolipin to form a ketone intermediate that undergoes nucleophilic attack by water and fragments into diacylglycerol, dihydroxyacetone and orthophosphate. Has higher affinity for cardiolipin with oxidized fatty acids and may degrade these species during the oxidative stress response to protect cells from apoptosis. By interacting with intracellular amyloid-beta, it may contribute to the neuronal dysfunction associated with Alzheimer disease (AD). Essential for structural and functional integrity of mitochondria. In addition to mitochondrial dehydrogenase activity, moonlights as a component of mitochondrial ribonuclease P, a complex that cleaves tRNA molecules in their 5'-ends. Together with TRMT10C/MRPP1, forms a subcomplex of the mitochondrial ribonuclease P, named MRPP1-MRPP2 subcomplex, which displays functions that are independent of the ribonuclease P activity. The MRPP1-MRPP2 subcomplex catalyzes the formation of N(1)-methylguanine and N(1)-methyladenine at position 9 (m1G9 and m1A9, respectively) in tRNAs; HSD17B10/MRPP2 acting as a non-catalytic subunit. The MRPP1-MRPP2 subcomplex also acts as a tRNA maturation platform: following 5'-end cleavage by the mitochondrial ribonuclease P complex, the MRPP1-MRPP2 subcomplex enhances the efficiency of 3'-processing catalyzed by ELAC2, retains the tRNA product after ELAC2 processing and presents the nascent tRNA to the mitochondrial CCA tRNA nucleotidyltransferase TRNT1 enzyme. Associates with mitochondrial DNA complexes at the nucleoids to initiate RNA processing and ribosome assembly. The protein is 3-hydroxyacyl-CoA dehydrogenase type-2 (Hsd17b10) of Rattus norvegicus (Rat).